We begin with the raw amino-acid sequence, 443 residues long: Serine/threonine-protein phosphatase 2A 55 kDa regulatory subunit B beta isoform (443 aa).

WD repeat units follow at residues 22 to 61 (TEAD…KNQV), 87 to 128 (EIEE…KRPE), 171 to 209 (AHTY…QSFN), and 220 to 260 (ELTE…CVTG). Position 275 is a phosphoserine (serine 275). WD repeat units lie at residues 279 to 317 (KLSS…RPIE), 334 to 375 (ENDC…DVTL), and 410 to 442 (DFSK…QDKV). Residue threonine 298 is modified to Phosphothreonine.

It belongs to the phosphatase 2A regulatory subunit B family. In terms of assembly, PP2A consists of a common heterodimeric core enzyme, composed of a 36 kDa catalytic subunit (subunit C) and a 65 kDa constant regulatory subunit (PR65 or subunit A), that associates with a variety of regulatory subunits. Proteins that associate with the core dimer include three families of regulatory subunits B (the R2/B/PR55/B55, R3/B''/PR72/PR130/PR59 and R5/B'/B56 families), the 48 kDa variable regulatory subunit, viral proteins, and cell signaling molecules. Interacts with TOMM22. Interacts with IER5 (via N- and C-terminal regions). Brain.

The protein localises to the cytoplasm. It localises to the cytoskeleton. It is found in the membrane. Its function is as follows. The B regulatory subunit might modulate substrate selectivity and catalytic activity, and might also direct the localization of the catalytic enzyme to a particular subcellular compartment. In Sus scrofa (Pig), this protein is Serine/threonine-protein phosphatase 2A 55 kDa regulatory subunit B beta isoform (PPP2R2B).